The sequence spans 298 residues: tRNA dimethylallyltransferase (298 aa).

16–23 (GPTASGKS) is an ATP binding site. Residue 18 to 23 (TASGKS) participates in substrate binding. Interaction with substrate tRNA regions lie at residues 41–44 (DSMQ) and 165–169 (QRIVR).

This sequence belongs to the IPP transferase family. Monomer. Requires Mg(2+) as cofactor.

It catalyses the reaction adenosine(37) in tRNA + dimethylallyl diphosphate = N(6)-dimethylallyladenosine(37) in tRNA + diphosphate. Functionally, catalyzes the transfer of a dimethylallyl group onto the adenine at position 37 in tRNAs that read codons beginning with uridine, leading to the formation of N6-(dimethylallyl)adenosine (i(6)A). The chain is tRNA dimethylallyltransferase from Rhizobium radiobacter (Agrobacterium tumefaciens).